The following is a 472-amino-acid chain: Tubulin gamma chain (472 aa).

142–148 provides a ligand contact to GTP; the sequence is AGGTGSG.

This sequence belongs to the tubulin family. Component of the gamma-tubulin small complex (gamma-TuSC) composed of tubulin gamma chain, gamma-tubulin complex protein 2 (GCP2) and gamma-tubulin complex protein 3 (GCP3). Interacts with GCP2 and GCP3. Interacts with EB1.

It localises to the cytoplasm. The protein localises to the cytoskeleton. Its subcellular location is the flagellum axoneme. The protein resides in the flagellum basal body. It is found in the spindle. It localises to the microtubule organizing center. Its function is as follows. Tubulin is the major constituent of microtubules (Potential). The gamma chain is found at microtubule organizing centers (MTOC) such as the centrosome. Component of the gamma-tubulin small complex (gamma-TuSC) involved in microtubule nucleation for the formation of median bodies and in the biogenesis of flagella. Gamma-TuSC may be required for the correct positioning of EB1 within the trophozoites. The protein is Tubulin gamma chain of Giardia intestinalis (strain ATCC 50803 / WB clone C6) (Giardia lamblia).